Reading from the N-terminus, the 354-residue chain is Nicotinate-nucleotide--dimethylbenzimidazole phosphoribosyltransferase (354 aa).

The active-site Proton acceptor is E319.

Belongs to the CobT family.

It catalyses the reaction 5,6-dimethylbenzimidazole + nicotinate beta-D-ribonucleotide = alpha-ribazole 5'-phosphate + nicotinate + H(+). It participates in nucleoside biosynthesis; alpha-ribazole biosynthesis; alpha-ribazole from 5,6-dimethylbenzimidazole: step 1/2. Functionally, catalyzes the synthesis of alpha-ribazole-5'-phosphate from nicotinate mononucleotide (NAMN) and 5,6-dimethylbenzimidazole (DMB). This chain is Nicotinate-nucleotide--dimethylbenzimidazole phosphoribosyltransferase, found in Pelodictyon phaeoclathratiforme (strain DSM 5477 / BU-1).